The primary structure comprises 339 residues: Ornithine carbamoyltransferase, catabolic (339 aa).

Carbamoyl phosphate is bound by residues 57 to 60, glutamine 84, arginine 108, and 135 to 138; these read STRT and HPTQ. L-ornithine-binding positions include asparagine 167, aspartate 231, and 235–236; that span reads SM. Carbamoyl phosphate is bound by residues 274–275 and arginine 319; that span reads CL.

Belongs to the aspartate/ornithine carbamoyltransferase superfamily. OTCase family.

The protein resides in the cytoplasm. It catalyses the reaction carbamoyl phosphate + L-ornithine = L-citrulline + phosphate + H(+). The protein operates within amino-acid degradation; L-arginine degradation via ADI pathway; carbamoyl phosphate from L-arginine: step 2/2. Functionally, reversibly catalyzes the transfer of the carbamoyl group from carbamoyl phosphate (CP) to the N(epsilon) atom of ornithine (ORN) to produce L-citrulline. The polypeptide is Ornithine carbamoyltransferase, catabolic (arcB) (Enterococcus faecalis (strain ATCC 700802 / V583)).